Consider the following 374-residue polypeptide: Chaperone protein DnaJ (374 aa).

One can recognise a J domain in the interval 4–69 (DFYETLCVSR…QKRAAYDRFG (66 aa)). A CR-type zinc finger spans residues 131–210 (GKTAQIRVPT…CSGQGRLTEE (80 aa)). Cys144, Cys147, Cys161, Cys164, Cys184, Cys187, Cys198, and Cys201 together coordinate Zn(2+). CXXCXGXG motif repeat units lie at residues 144-151 (CDECAGSG), 161-168 (CPMCHGAG), 184-191 (CPQCQGRG), and 198-205 (CRKCSGQG).

The protein belongs to the DnaJ family. Homodimer. Zn(2+) is required as a cofactor.

It is found in the cytoplasm. Functionally, participates actively in the response to hyperosmotic and heat shock by preventing the aggregation of stress-denatured proteins and by disaggregating proteins, also in an autonomous, DnaK-independent fashion. Unfolded proteins bind initially to DnaJ; upon interaction with the DnaJ-bound protein, DnaK hydrolyzes its bound ATP, resulting in the formation of a stable complex. GrpE releases ADP from DnaK; ATP binding to DnaK triggers the release of the substrate protein, thus completing the reaction cycle. Several rounds of ATP-dependent interactions between DnaJ, DnaK and GrpE are required for fully efficient folding. Also involved, together with DnaK and GrpE, in the DNA replication of plasmids through activation of initiation proteins. The chain is Chaperone protein DnaJ from Chelativorans sp. (strain BNC1).